A 98-amino-acid chain; its full sequence is Large ribosomal subunit protein uL23 (98 aa).

It belongs to the universal ribosomal protein uL23 family. Part of the 50S ribosomal subunit. Contacts protein L29, and trigger factor when it is bound to the ribosome.

Functionally, one of the early assembly proteins it binds 23S rRNA. One of the proteins that surrounds the polypeptide exit tunnel on the outside of the ribosome. Forms the main docking site for trigger factor binding to the ribosome. This Streptococcus pyogenes serotype M1 protein is Large ribosomal subunit protein uL23.